Here is a 275-residue protein sequence, read N- to C-terminus: tRNA pseudouridine synthase A (275 aa).

Asp-56 (nucleophile) is an active-site residue. Tyr-110 is a substrate binding site.

This sequence belongs to the tRNA pseudouridine synthase TruA family.

It catalyses the reaction uridine(38/39/40) in tRNA = pseudouridine(38/39/40) in tRNA. Functionally, formation of pseudouridine at positions 38, 39 and 40 in the anticodon stem and loop of transfer RNAs. In Haloarcula marismortui (strain ATCC 43049 / DSM 3752 / JCM 8966 / VKM B-1809) (Halobacterium marismortui), this protein is tRNA pseudouridine synthase A.